The sequence spans 147 residues: Large ribosomal subunit protein uL13 (147 aa).

It belongs to the universal ribosomal protein uL13 family. Part of the 50S ribosomal subunit.

In terms of biological role, this protein is one of the early assembly proteins of the 50S ribosomal subunit, although it is not seen to bind rRNA by itself. It is important during the early stages of 50S assembly. This chain is Large ribosomal subunit protein uL13, found in Nocardia farcinica (strain IFM 10152).